Reading from the N-terminus, the 684-residue chain is Cyclic nucleotide-gated channel alpha-1 (684 aa).

Over 1-161 (MKTNIINTWH…PSGNTYYNWL (161 aa)) the chain is Cytoplasmic. The interval 34-145 (ACSSFSDDDN…TKEKKEEEKK (112 aa)) is disordered. Over residues 39 to 54 (SDDDNGSLSEESENED) the composition is skewed to acidic residues. Basic and acidic residues predominate over residues 105–145 (SKADDKNENKKDPEKKKKKEKEKEKKKKEEKTKEKKEEEKK). The helical transmembrane segment at 162-183 (FCITLPVMYNWTMIIARACFDE) threads the bilayer. At 184–193 (LQSDYLEYWL) the chain is on the extracellular side. A helical membrane pass occupies residues 194–214 (IFDYVSDVVYLADMFVRTRTG). At 215–239 (YLEQGLLVKDRMKLIEKYKANLQFK) the chain is on the cytoplasmic side. The helical transmembrane segment at 240–258 (LDVLSVIPTDLLYIKFGWN) threads the bilayer. The Extracellular segment spans residues 259-263 (YPEIR). Residues 264-282 (LNRLLRISRMFEFFQRTET) traverse the membrane as a helical segment. The Cytoplasmic segment spans residues 283 to 289 (RTNYPNI). The segment at 287–395 (PNIFRISNLV…GNIGSMISNM (109 aa)) is ion conduction pathway. The chain crosses the membrane as a helical span at residues 290–313 (FRISNLVMYIVIIIHWNACVYYSI). Residues 314-336 (SKAIGFGNDTWVYPDVNDPEFGR) lie on the Extracellular side of the membrane. N-linked (GlcNAc...) asparagine glycosylation occurs at Asn321. Helical transmembrane passes span 337–371 (LARK…IFVV) and 372–396 (VDFL…SNMN). Residues 354 to 357 (TIGE) form a selectivity filter region. The interval 397 to 473 (AARAEFQSRV…DTLKKVRIFA (77 aa)) is C-linker. Over 397–684 (AARAEFQSRV…ESELTESLQD (288 aa)) the chain is Cytoplasmic. Residues 477 to 597 (AGLLVELVLK…EEKGRQILMK (121 aa)) form a cyclic nucleotide-binding domain region. 3',5'-cyclic GMP is bound by residues Gly537, Ser540, Arg553, and Thr554. Residues Arg553 and Thr554 each coordinate 3',5'-cyclic AMP. Residues 615–669 (LEEKVTRMEGSVDLLQTRFARILAEYESMQQKLKQRLTKVEKFLKPLIETEFSAL) adopt a coiled-coil conformation.

It belongs to the cyclic nucleotide-gated cation channel (TC 1.A.1.5) family. CNGA1 subfamily. Forms heterotetrameric channels composed of CNGA1 and CNGB1 subunits with 3:1 stoichiometry. May also form cyclic nucleotide-activated homotetrameric channels, that are efficiently activated by saturating cGMP, but poorly activated by saturating cAMP compared to the heterotetramer with CNGB1. The channel binds Ca(2+)-bound CALM1 via CaM1 and CaM2 regions of the CNGB1 subunit; this interaction modulates the affinity of the channel for cNMPs in response to intracellular Ca(2+) levels. In terms of tissue distribution, rod cells in the retina and inner medulla of kidney.

The protein localises to the cell membrane. It carries out the reaction Ca(2+)(in) = Ca(2+)(out). It catalyses the reaction Na(+)(in) = Na(+)(out). The catalysed reaction is K(+)(in) = K(+)(out). The enzyme catalyses NH4(+)(in) = NH4(+)(out). It carries out the reaction Rb(+)(in) = Rb(+)(out). It catalyses the reaction Li(+)(in) = Li(+)(out). The catalysed reaction is Cs(+)(in) = Cs(+)(out). Pore-forming subunit of the rod cyclic nucleotide-gated channel. Mediates rod photoresponses at dim light converting transient changes in intracellular cGMP levels into electrical signals. In the dark, cGMP levels are high and keep the channel open enabling a steady inward current carried by Na(+) and Ca(2+) ions that leads to membrane depolarization and neurotransmitter release from synaptic terminals. Upon photon absorption cGMP levels decline leading to channel closure and membrane hyperpolarization that ultimately slows neurotransmitter release and signals the presence of light, the end point of the phototransduction cascade. Conducts cGMP- and cAMP-gated ion currents, with permeability for monovalent and divalent cations. The selectivity for Ca(2+) over Na(+) increases with cGMP concentrations, whereas the selectivity among monovalent ions is independent of the cGMP levels. The polypeptide is Cyclic nucleotide-gated channel alpha-1 (Cnga1) (Mus musculus (Mouse)).